The following is an 862-amino-acid chain: Molybdenum cofactor sulfurase (862 aa).

Phosphoserine is present on S34. K264 bears the N6-(pyridoxal phosphate)lysine mark. C424 is a catalytic residue. Position 517 is a phosphoserine (S517). Positions 704–855 (RKTPKKGQPP…LSVGSEVLPV (152 aa)) constitute an MOSC domain.

This sequence belongs to the class-V pyridoxal-phosphate-dependent aminotransferase family. MOCOS subfamily. The cofactor is pyridoxal 5'-phosphate.

It catalyses the reaction Mo-molybdopterin + L-cysteine + AH2 = thio-Mo-molybdopterin + L-alanine + A + H2O. It functions in the pathway cofactor biosynthesis; molybdopterin biosynthesis. Sulfurates the molybdenum cofactor. Sulfation of molybdenum is essential for xanthine dehydrogenase (XDH) and aldehyde oxidase (ADO) enzymes in which molybdenum cofactor is liganded by 1 oxygen and 1 sulfur atom in active form. This Mus musculus (Mouse) protein is Molybdenum cofactor sulfurase (Mocos).